The sequence spans 119 residues: Nascent polypeptide-associated complex protein (119 aa).

The 69-residue stretch at 5–73 folds into the NAC-A/B domain; it reads RMNSREMRRL…MREVPKEPEE (69 aa).

It belongs to the NAC-alpha family. As to quaternary structure, homodimer. Interacts with the ribosome. Binds ribosomal RNA.

Functionally, contacts the emerging nascent chain on the ribosome. This chain is Nascent polypeptide-associated complex protein, found in Thermoplasma acidophilum (strain ATCC 25905 / DSM 1728 / JCM 9062 / NBRC 15155 / AMRC-C165).